A 671-amino-acid polypeptide reads, in one-letter code: MGNFKIYTSFKPKGDQPKAIKQLVEGIKKGYKHQVLLGVTGSGKTFTIANVIEKVNKPTLVIAHNKTLAAQLYGELKELFPYNAVEYYVSYYDYYQPEAYIPETDTYIEKDALINDDIDRMRHSATLSVLTRQDVIVVASVSCIYGIGSPDDYMSMHVTLEEGMKTERDAMLKKLVEILYIRAEEEFRRGAFRVRGDVVDIFASHCLDKAYRVEFFDDEIDAIYEIDPLTGSRQKRLQRIFIPPNSHWVTPEPRLKKALETIEEELQERIKYFKERGEELFAERIEKRTRFDMELLSQFGHCHGIENYSRHLSGRLPGEPPFTLIDYIYAGPSKGDFLTVIDESHVTVPQIGGMYEGDRSRKQTLVEYGFRLPSALDNRPLTFKEFEHRMNYVIYVSATPGDYEIEKSGGRIVEQIIRPTGLVDPKIEVRPATNQVEDLLEEIHKRVSRGERVLVTTITKKMAEDLTDYYTTVGIKAKYLHSDIDTLERVEILKDLRLGKFDVLIGVNLLREGLDLPEVSLVAIFDADKEGFLRSERSLIQTAGRASRNINGTVIFYADTVTDSMKKAIEETERRREIQMKYNKKNGISPETVKSKIKDILSSIYEKDYVTVDVVKEEAEEYELNEETIKKLEQEMKHAAENLEFEKAAEIRDKIFKIKEKMLKLGMKLTV.

Residues 25–178 (EGIKKGYKHQ…DAMLKKLVEI (154 aa)) form the Helicase ATP-binding domain. 38–45 (GVTGSGKT) is an ATP binding site. The short motif at 91–114 (YYDYYQPEAYIPETDTYIEKDALI) is the Beta-hairpin element. In terms of domain architecture, Helicase C-terminal spans 435-601 (QVEDLLEEIH…TVKSKIKDIL (167 aa)). Residues 626–661 (EETIKKLEQEMKHAAENLEFEKAAEIRDKIFKIKEK) form the UVR domain.

Belongs to the UvrB family. Forms a heterotetramer with UvrA during the search for lesions. Interacts with UvrC in an incision complex.

The protein resides in the cytoplasm. In terms of biological role, the UvrABC repair system catalyzes the recognition and processing of DNA lesions. A damage recognition complex composed of 2 UvrA and 2 UvrB subunits scans DNA for abnormalities. Upon binding of the UvrA(2)B(2) complex to a putative damaged site, the DNA wraps around one UvrB monomer. DNA wrap is dependent on ATP binding by UvrB and probably causes local melting of the DNA helix, facilitating insertion of UvrB beta-hairpin between the DNA strands. Then UvrB probes one DNA strand for the presence of a lesion. If a lesion is found the UvrA subunits dissociate and the UvrB-DNA preincision complex is formed. This complex is subsequently bound by UvrC and the second UvrB is released. If no lesion is found, the DNA wraps around the other UvrB subunit that will check the other stand for damage. The sequence is that of UvrABC system protein B from Thermodesulfovibrio yellowstonii (strain ATCC 51303 / DSM 11347 / YP87).